We begin with the raw amino-acid sequence, 122 residues long: Large ribosomal subunit protein uL14c (122 aa).

Belongs to the universal ribosomal protein uL14 family. As to quaternary structure, part of the 50S ribosomal subunit.

The protein resides in the plastid. Its subcellular location is the chloroplast. Binds to 23S rRNA. This chain is Large ribosomal subunit protein uL14c, found in Porphyra purpurea (Red seaweed).